Here is a 678-residue protein sequence, read N- to C-terminus: MDTPRPQLLDFQFHQNNDSFTLHFQQRLILTHSKDNPCLWIGSGIADIDMFRGNFSIKDKLQEKIALTDAIVSQSPDGWLIHFSRGSDISATLNISADDQGRLLLELQNDNLNHNRIWLRLAAQPEDHIYGCGEQFSYFDLRGKPFPLWTSEQGVGRNKQTYVTWQADCKENAGGDYYWTFFPQPTFVSTQKYYCHVDNSCYMNFDFSAPEYHELALWEDKATLRFECADTYISLLEKLTALLGRQPELPDWIYDGVTLGIQGGTEVCQKKLDTMRNAGVKVNGIWAQDWSGIRMTSFGKRVMWNWKWNSENYPQLDSRIKQWNQEGVQFLAYINPYVASDKDLCEEAAQHGYLAKDASGGDYLVEFGEFYGGVVDLTNPEAYAWFKEVIKKNMIELGCGGWMADFGEYLPTDTYLHNGVSAEIMHNAWPALWAKCNYEALEETGKLGEILFFMRAGSTGSQKYSTMMWAGDQNVDWSLDDGLASVVPAALSLAMTGHGLHHSDIGGYTTLFEMKRSKELLLRWCDFSAFTPMMRTHEGNRPGDNWQFDGDAETIAHFARMTTVFTTLKPYLKEAVALNAKSGLPVMRPLFLHYEDDAHTYTLKYQYLLGRDILVAPVHEEGRSDWTLYLPEDNWVHAWTGEAFRGGEVTVNAPIGKPPVFYRADSEWAALFASLKSI.

A 6-sulfo-alpha-D-quinovosyldiacylglycerol contacts are provided by Gln288, Arg301, Val302, and Trp304. The active-site Nucleophile is Asp405. Residue Glu408 is part of the active site. The active-site Proton donor is Asp472. His537 contributes to the a 6-sulfo-alpha-D-quinovosyldiacylglycerol binding site.

It belongs to the glycosyl hydrolase 31 family.

It carries out the reaction a 6-sulfo-alpha-D-quinovosyldiacylglycerol + H2O = 6-sulfo-alpha-D-quinovose + a 1,2-diacyl-sn-glycerol. The enzyme catalyses 3-(6-sulfo-alpha-D-quinovosyl)glycerol + H2O = 6-sulfo-alpha-D-quinovose + glycerol. The protein operates within glycolipid metabolism. Its activity is regulated as follows. Is inactivated in vitro by the mechanism-based inactivator 5-fluoro-beta-L-idopyranosyl fluoride (5FIdoF) that yields a covalent glycosyl-enzyme complex with the active site nucleophile Asp-405. Functionally, catalyzes the hydrolysis of sulfoquinovosyl diacylglycerides (SQDG) to sulfoquinovose (SQ), which is then degraded by E.coli through the SQ Embden-Meyerhof-Parnas (SQ-EMP) sulfoglycolysis pathway as a source of carbon and sulfur. Therefore, is likely involved in the utilization of the sulfoquinovose headgroup found in ubiquitous plant sulfolipids. Is also able to hydrolyze simple sulfoquinovosides such as sulfoquinovosyl glycerol (SQGro). In vitro, can use the substrate analog para-nitrophenyl alpha-sulfoquinovoside (PNPSQ), but shows no detectable activity toward 4-nitrophenyl alpha-D-glucopyranoside (PNPGlc). Is a retaining glycoside hydrolase, since it forms the alpha anomer of SQ. Also exhibits some alpha-glucosidase activity against alpha-glucosyl fluoride in vitro, although natural substrates, such as alpha-glucobioses are scarcely hydrolyzed. This chain is Sulfoquinovosidase, found in Escherichia coli (strain K12).